We begin with the raw amino-acid sequence, 384 residues long: Alanine racemase (384 aa).

Catalysis depends on lysine 46, which acts as the Proton acceptor; specific for D-alanine. At lysine 46 the chain carries N6-(pyridoxal phosphate)lysine. Arginine 144 lines the substrate pocket. Residue tyrosine 278 is the Proton acceptor; specific for L-alanine of the active site. Residue methionine 326 coordinates substrate.

It belongs to the alanine racemase family. Requires pyridoxal 5'-phosphate as cofactor.

It carries out the reaction L-alanine = D-alanine. Its pathway is amino-acid biosynthesis; D-alanine biosynthesis; D-alanine from L-alanine: step 1/1. Catalyzes the interconversion of L-alanine and D-alanine. May also act on other amino acids. The sequence is that of Alanine racemase (alr) from Frankia casuarinae (strain DSM 45818 / CECT 9043 / HFP020203 / CcI3).